A 385-amino-acid polypeptide reads, in one-letter code: UPF0496 protein At3g28290 (385 aa).

A coiled-coil region spans residues 138–214 (KDKENDVGKK…IEMEISSRKK (77 aa)). Transmembrane regions (helical) follow at residues 217–237 (IISNVLFIGAFVAVAVGSMVL) and 242–262 (VGAGVGVAGLLSLPLIAIGWV). A coiled-coil region spans residues 267-294 (ILENKIQAREKQEEALKKAHRIANEMDK).

It belongs to the UPF0496 family. As to expression, widely expressed.

It is found in the membrane. The chain is UPF0496 protein At3g28290 from Arabidopsis thaliana (Mouse-ear cress).